The sequence spans 264 residues: S-adenosylmethionine decarboxylase proenzyme (264 aa).

Serine 113 functions as the Schiff-base intermediate with substrate; via pyruvic acid in the catalytic mechanism. Pyruvic acid (Ser); by autocatalysis is present on serine 113. The active-site Proton acceptor; for processing activity is histidine 118. Cysteine 141 serves as the catalytic Proton donor; for catalytic activity.

The protein belongs to the prokaryotic AdoMetDC family. Type 2 subfamily. In terms of assembly, heterooctamer of four alpha and four beta chains arranged as a tetramer of alpha/beta heterodimers. Pyruvate is required as a cofactor. In terms of processing, is synthesized initially as an inactive proenzyme. Formation of the active enzyme involves a self-maturation process in which the active site pyruvoyl group is generated from an internal serine residue via an autocatalytic post-translational modification. Two non-identical subunits are generated from the proenzyme in this reaction, and the pyruvate is formed at the N-terminus of the alpha chain, which is derived from the carboxyl end of the proenzyme. The post-translation cleavage follows an unusual pathway, termed non-hydrolytic serinolysis, in which the side chain hydroxyl group of the serine supplies its oxygen atom to form the C-terminus of the beta chain, while the remainder of the serine residue undergoes an oxidative deamination to produce ammonia and the pyruvoyl group blocking the N-terminus of the alpha chain.

It catalyses the reaction S-adenosyl-L-methionine + H(+) = S-adenosyl 3-(methylsulfanyl)propylamine + CO2. Its pathway is amine and polyamine biosynthesis; S-adenosylmethioninamine biosynthesis; S-adenosylmethioninamine from S-adenosyl-L-methionine: step 1/1. Functionally, catalyzes the decarboxylation of S-adenosylmethionine to S-adenosylmethioninamine (dcAdoMet), the propylamine donor required for the synthesis of the polyamines spermine and spermidine from the diamine putrescine. The chain is S-adenosylmethionine decarboxylase proenzyme from Xanthomonas euvesicatoria pv. vesicatoria (strain 85-10) (Xanthomonas campestris pv. vesicatoria).